The chain runs to 130 residues: Albumin-1 D (130 aa).

An N-terminal signal peptide occupies residues 1–26 (MASVKLASLIVLFATLGMFLTKNVGA). Cystine bridges form between C29–C46, C33–C48, and C41–C58. Propeptides lie at residues 64–69 (VFLKAN) and 123–130 (LLKSVSTA).

The C-terminal glycine may be removed from PA1b. As to expression, major component of both the cotyledons and embryonic axes of mature seeds.

In terms of biological role, PA1b binds to basic 7S globulin (BG) and stimulates its phosphorylation activity. Involved in the signal transduction system to regulate the growth and differentiation as a hormone peptide. Toxic to various insects through binding to a high affinity binding site in the insect gut. The protein is Albumin-1 D of Pisum sativum (Garden pea).